The primary structure comprises 88 residues: Cytochrome c oxidase subunit 6B2 (88 aa).

A CHCH domain is found at 29–75 (TRNCYQNFLDYHRCIKTMNRRGKSTQPCEYYFRVYHSLCPISWVQRW). The short motif at 32-42 (CYQNFLDYHRC) is the Cx9C motif element. 2 cysteine pairs are disulfide-bonded: C32/C67 and C42/C56. The Cx10C motif motif lies at 56 to 67 (CEYYFRVYHSLC).

It belongs to the cytochrome c oxidase subunit 6B family. As to quaternary structure, component of the cytochrome c oxidase (complex IV, CIV), a multisubunit enzyme composed of 14 subunits. The complex is composed of a catalytic core of 3 subunits MT-CO1, MT-CO2 and MT-CO3, encoded in the mitochondrial DNA, and 11 supernumerary subunits COX4I1 (or COX4I2), COX5A, COX5B, COX6A2 (or COX6A1), COX6B1 (or COX6B2), COX6C, COX7A1 (or COX7A2), COX7B, COX7C, COX8B and NDUFA4, which are encoded in the nuclear genome. The complex exists as a monomer or a dimer and forms supercomplexes (SCs) in the inner mitochondrial membrane with NADH-ubiquinone oxidoreductase (complex I, CI) and ubiquinol-cytochrome c oxidoreductase (cytochrome b-c1 complex, complex III, CIII), resulting in different assemblies (supercomplex SCI(1)III(2)IV(1) and megacomplex MCI(2)III(2)IV(2)). Testis specific.

Its subcellular location is the mitochondrion inner membrane. The protein operates within energy metabolism; oxidative phosphorylation. In terms of biological role, component of the cytochrome c oxidase, the last enzyme in the mitochondrial electron transport chain which drives oxidative phosphorylation. The respiratory chain contains 3 multisubunit complexes succinate dehydrogenase (complex II, CII), ubiquinol-cytochrome c oxidoreductase (cytochrome b-c1 complex, complex III, CIII) and cytochrome c oxidase (complex IV, CIV), that cooperate to transfer electrons derived from NADH and succinate to molecular oxygen, creating an electrochemical gradient over the inner membrane that drives transmembrane transport and the ATP synthase. Cytochrome c oxidase is the component of the respiratory chain that catalyzes the reduction of oxygen to water. Electrons originating from reduced cytochrome c in the intermembrane space (IMS) are transferred via the dinuclear copper A center (CU(A)) of subunit 2 and heme A of subunit 1 to the active site in subunit 1, a binuclear center (BNC) formed by heme A3 and copper B (CU(B)). The BNC reduces molecular oxygen to 2 water molecules using 4 electrons from cytochrome c in the IMS and 4 protons from the mitochondrial matrix. This is Cytochrome c oxidase subunit 6B2 (COX6B2) from Bos taurus (Bovine).